A 625-amino-acid chain; its full sequence is MLPLHLVHVLYPIGLIANLFFGSAFTIQWFLSERRKKACVPKSFWILSSIGAVMMIAHGFIQSQFPIALLHGANLVIYFRNLNVSSSHSLSLRATLFILVVTLLLTTLPFVLGSYYYPNMQWMASPNIFHLPLPPPNIYWHIAGCIGLFTFSSRFFIQWCHLEINNRSTLPALFWLVSFIGGFLAFLYFIRTGDPVNIISYGCGLLPSLANLLIIYKKSRLPEFHNHSYFLSAGEPSGDILGSDLLHNIKTCDPTIRCFGVGGPLMRKEGFEPLIHMEEFQVSGFLEVFFSIFGLFKKYRRLYKAILQENPETVFCIDFPDFHFFLIKKLRKCGYKGKIIHYVCPSIWAWRPKRKKILEKYLDTLLLILPFEKDLFINSPLKTIYLGHPLVKTISNFQYCSSWKQQLSISDQPIVALFPGSRPGDIFRNLQVQIRAFLASSLAQSHQILVSSCNPKYDKNILDVLEKEGCRGKIISSTFRYQLMRDCDCALAKCGTIVLEAALNQTPTIVTCLLGPIDTFLAKYIFKILMPAYSLPNIITGSIIFPEFIGGKHDFNPEEVAAAIDILAKPKSKEKQKLACQQLLDTLMTNVVTPEECLRIICSQNSHLHLEKGILKNLHPRDSSV.

The interval 1 to 224 (MLPLHLVHVL…IYKKSRLPEF (224 aa)) is unknown. Positions 225–625 (HNHSYFLSAG…KNLHPRDSSV (401 aa)) are lipid-A-disaccharide synthase.

This sequence in the C-terminal section; belongs to the LpxB family.

The enzyme catalyses a lipid X + a UDP-2-N,3-O-bis[(3R)-3-hydroxyacyl]-alpha-D-glucosamine = a lipid A disaccharide + UDP + H(+). Its pathway is bacterial outer membrane biogenesis; LPS lipid A biosynthesis. Functionally, condensation of UDP-2,3-diacylglucosamine and 2,3-diacylglucosamine-1-phosphate to form lipid A disaccharide, a precursor of lipid A, a phosphorylated glycolipid that anchors the lipopolysaccharide to the outer membrane of the cell. In Chlamydia felis (strain Fe/C-56) (Chlamydophila felis), this protein is Lipid-A-disaccharide synthase (lpxB).